A 344-amino-acid polypeptide reads, in one-letter code: Ribosomal RNA large subunit methyltransferase Cfr (344 aa).

Glu90 acts as the Proton acceptor in catalysis. The 234-residue stretch at 97–330 (KQGWESFCIS…ATVRTQFGSE (234 aa)) folds into the Radical SAM core domain. Residues Cys104 and Cys335 are joined by a disulfide bond. The [4Fe-4S] cluster site is built by Cys111, Cys115, and Cys118. Residues 157–158 (GE), Ser188, 211–213 (SLH), and Asn292 each bind S-adenosyl-L-methionine. Cys335 serves as the catalytic S-methylcysteine intermediate.

The protein belongs to the radical SAM superfamily. RlmN family. Cfr subfamily. Requires [4Fe-4S] cluster as cofactor.

Its subcellular location is the cytoplasm. It carries out the reaction adenosine(2503) in 23S rRNA + 2 reduced [2Fe-2S]-[ferredoxin] + 2 S-adenosyl-L-methionine = 8-methyladenosine(2503) in 23S rRNA + 5'-deoxyadenosine + L-methionine + 2 oxidized [2Fe-2S]-[ferredoxin] + S-adenosyl-L-homocysteine. In terms of biological role, specifically methylates position 8 of adenine 2503 in 23S rRNA. Confers resistance to some classes of antibiotics. The sequence is that of Ribosomal RNA large subunit methyltransferase Cfr from Clostridium botulinum (strain Okra / Type B1).